The chain runs to 116 residues: Nitrogenase iron-iron protein delta chain (116 aa).

Hexamer of two alpha, two beta, and two delta chains. Iron-sulfur cluster serves as cofactor.

It catalyses the reaction N2 + 8 reduced [2Fe-2S]-[ferredoxin] + 16 ATP + 16 H2O = H2 + 8 oxidized [2Fe-2S]-[ferredoxin] + 2 NH4(+) + 16 ADP + 16 phosphate + 6 H(+). Its function is as follows. The key enzymatic reactions in nitrogen fixation are catalyzed by the nitrogenase complex, which has 2 components: the iron protein (component 2) and a component 1 which is either a molybdenum-iron protein, a vanadium-iron, or an iron-iron protein. This is Nitrogenase iron-iron protein delta chain (anfG) from Clostridium pasteurianum.